Consider the following 1038-residue polypeptide: Protein transport protein SEC24 A (1038 aa).

Residues 1–247 (MGTENQGYPN…PPHTGGFAQR (247 aa)) are disordered. The segment covering 22–33 (SAPPPGIPPQSG) has biased composition (pro residues). Zn(2+) is bound by residues Cys371, Cys374, Cys393, and Cys396. The tract at residues 371-396 (CRRCRTYVNPFVTFTDSGRKWRCNIC) is zinc finger-like.

The protein belongs to the SEC23/SEC24 family. SEC24 subfamily. In terms of assembly, component of the coat protein complex II (COPII), composed of at least five proteins: the Sec23/24 complex, the Sec13/31 complex and Sar1. Interacts with SEC221, SEC23E/SEC23A, SEC23B, SEC23G/SEC23C and SEC23F/SEC23D. As to quaternary structure, (Microbial infection) Interacts with turnip mosaic virus (TuMV) 6K2 in COPII-coated vesicles. Mainly expressed in pollen, leaves, inflorescences, roots and stems, and, to a lower extent, in cotyledons, petioles and hypocotyls.

Its subcellular location is the cytoplasmic vesicle. The protein resides in the COPII-coated vesicle membrane. The protein localises to the endoplasmic reticulum membrane. It localises to the golgi apparatus membrane. It is found in the cytoplasm. Its subcellular location is the cytosol. Functionally, essential protein. Component of the coat protein complex II (COPII), that covers ER-derived vesicles involved in transport from the endoplasmic reticulum to the Golgi apparatus. COPII is composed of at least five proteins: the SEC23/24 complex, the SEC13/31 complex, and the protein SAR1. Acts in the cytoplasm to promote the transport of secretory, plasma membrane, and vacuolar proteins from the endoplasmic reticulum to the Golgi complex. Involved in maintaining the dynamic identity of organelles of the early secretory pathway. Regulates cell size patterning, and prevents CDKA;1-, DEK1- and ACR4-dependent endoreduplication and giant cells formation in sepals. Required for male gametophytes (pollen grains) development and transmission. (Microbial infection) Contributes to viral systemic infection of turnip mosaic virus (TuMV) by triggering the formation of host endoplasmic reticulum (ER)-derived viral vesicles that carry the viral RNA (vRNA) to plasmodesmata for cell-to-cell viral movement. This chain is Protein transport protein SEC24 A, found in Arabidopsis thaliana (Mouse-ear cress).